The sequence spans 405 residues: Formate-dependent phosphoribosylglycinamide formyltransferase (405 aa).

N(1)-(5-phospho-beta-D-ribosyl)glycinamide-binding positions include 22–23 and E82; that span reads EL. Residues R115, K162, 167-172, 202-205, and E210 contribute to the ATP site; these read SSGKGQ and EGFI. Residues 120-320 form the ATP-grasp domain; sequence RLAAETLGLA…EFELHARAIL (201 aa). Residues E279 and E291 each coordinate Mg(2+). N(1)-(5-phospho-beta-D-ribosyl)glycinamide is bound by residues D298, K367, and 374-375; that span reads RR.

It belongs to the PurK/PurT family. In terms of assembly, homodimer.

It carries out the reaction N(1)-(5-phospho-beta-D-ribosyl)glycinamide + formate + ATP = N(2)-formyl-N(1)-(5-phospho-beta-D-ribosyl)glycinamide + ADP + phosphate + H(+). It participates in purine metabolism; IMP biosynthesis via de novo pathway; N(2)-formyl-N(1)-(5-phospho-D-ribosyl)glycinamide from N(1)-(5-phospho-D-ribosyl)glycinamide (formate route): step 1/1. In terms of biological role, involved in the de novo purine biosynthesis. Catalyzes the transfer of formate to 5-phospho-ribosyl-glycinamide (GAR), producing 5-phospho-ribosyl-N-formylglycinamide (FGAR). Formate is provided by PurU via hydrolysis of 10-formyl-tetrahydrofolate. In Delftia acidovorans (strain DSM 14801 / SPH-1), this protein is Formate-dependent phosphoribosylglycinamide formyltransferase.